The primary structure comprises 931 residues: Translation initiation factor IF-2 (931 aa).

Residues 32 to 310 (KSASSTVEPP…SSKARKNRLA (279 aa)) form a disordered region. The segment covering 50 to 59 (FASSGQGNAS) has biased composition (polar residues). A compositionally biased stretch (pro residues) spans 82–96 (PAAPSAPKPAAPAAP). Residues 156–168 (GNAPQGGNNANGA) show a composition bias toward low complexity. Composition is skewed to gly residues over residues 217-238 (RPGQ…GGAK), 248-271 (GQGG…GFQG), and 281-298 (ARGG…GRQG). The region spanning 424-596 (PRPPVVTVMG…VLLTADAELD (173 aa)) is the tr-type G domain. The G1 stretch occupies residues 433 to 440 (GHVDHGKT). 433-440 (GHVDHGKT) contacts GTP. A G2 region spans residues 458-462 (GITQR). The segment at 483-486 (DTPG) is G3. Residues 483–487 (DTPGH) and 537–540 (NKID) each bind GTP. A G4 region spans residues 537–540 (NKID). The segment at 573-575 (SAK) is G5.

This sequence belongs to the TRAFAC class translation factor GTPase superfamily. Classic translation factor GTPase family. IF-2 subfamily.

Its subcellular location is the cytoplasm. One of the essential components for the initiation of protein synthesis. Protects formylmethionyl-tRNA from spontaneous hydrolysis and promotes its binding to the 30S ribosomal subunits. Also involved in the hydrolysis of GTP during the formation of the 70S ribosomal complex. The sequence is that of Translation initiation factor IF-2 from Bifidobacterium adolescentis (strain ATCC 15703 / DSM 20083 / NCTC 11814 / E194a).